We begin with the raw amino-acid sequence, 330 residues long: Cathepsin S (330 aa).

The first 17 residues, 1 to 17, serve as a signal peptide directing secretion; it reads MAVLGAPGVLCDNGATA. Residues 18 to 112 constitute a propeptide, activation peptide; it reads ERPTLDHHWD…GTLKSSSNQT (95 aa). N-linked (GlcNAc...) asparagine glycosylation is found at asparagine 100 and asparagine 110. Intrachain disulfides connect cysteine 124-cysteine 222, cysteine 134-cysteine 179, cysteine 168-cysteine 211, and cysteine 271-cysteine 319. Cysteine 137 is an active-site residue. Active-site residues include histidine 277 and asparagine 297.

This sequence belongs to the peptidase C1 family. As to quaternary structure, monomer. As to expression, highest levels occur in the ileum followed by spleen, brain, thyroid, ovary and uterus. Low levels are found in the liver, kidney, jejunum and lung with lowest levels in the heart.

It localises to the lysosome. The protein localises to the secreted. Its subcellular location is the cytoplasmic vesicle. It is found in the phagosome. The enzyme catalyses Similar to cathepsin L, but with much less activity on Z-Phe-Arg-|-NHMec, and more activity on the Z-Val-Val-Arg-|-Xaa compound.. Its function is as follows. Thiol protease. Key protease responsible for the removal of the invariant chain from MHC class II molecules and MHC class II antigen presentation. The bond-specificity of this proteinase is in part similar to the specificities of cathepsin L. The chain is Cathepsin S (Ctss) from Rattus norvegicus (Rat).